The primary structure comprises 237 residues: Large ribosomal subunit protein uL3 (237 aa).

Disordered regions lie at residues 133-155 (ASHGNSITHRSHGSTGQRQDPGK) and 213-237 (PENAPKPAGLRAGAKAEAAATEGAE). Polar residues predominate over residues 135–150 (HGNSITHRSHGSTGQR). Gln151 is subject to N5-methylglutamine. A compositionally biased stretch (low complexity) spans 220–237 (AGLRAGAKAEAAATEGAE).

The protein belongs to the universal ribosomal protein uL3 family. Part of the 50S ribosomal subunit. Forms a cluster with proteins L14 and L19. Post-translationally, methylated by PrmB.

Functionally, one of the primary rRNA binding proteins, it binds directly near the 3'-end of the 23S rRNA, where it nucleates assembly of the 50S subunit. This chain is Large ribosomal subunit protein uL3, found in Brucella suis biovar 1 (strain 1330).